Consider the following 222-residue polypeptide: Protein GrpE (222 aa).

2 disordered regions span residues 1–21 (MNDGFAMNTHSKDERAPENGQ) and 200–222 (KGGPKAETPAATSEQAAQGPEGA).

Belongs to the GrpE family. Homodimer.

The protein resides in the cytoplasm. Its function is as follows. Participates actively in the response to hyperosmotic and heat shock by preventing the aggregation of stress-denatured proteins, in association with DnaK and GrpE. It is the nucleotide exchange factor for DnaK and may function as a thermosensor. Unfolded proteins bind initially to DnaJ; upon interaction with the DnaJ-bound protein, DnaK hydrolyzes its bound ATP, resulting in the formation of a stable complex. GrpE releases ADP from DnaK; ATP binding to DnaK triggers the release of the substrate protein, thus completing the reaction cycle. Several rounds of ATP-dependent interactions between DnaJ, DnaK and GrpE are required for fully efficient folding. The chain is Protein GrpE from Chelativorans sp. (strain BNC1).